The primary structure comprises 105 residues: Biogenesis of lysosome-related organelles complex 1 subunit SNN1 (105 aa).

The stretch at 70–105 forms a coiled coil; the sequence is WKDDNERLDSLRKRVDSLKSRFQSLKLRSDKLEQRE.

The protein belongs to the SNAPIN family. In terms of assembly, component of the biogenesis of lysosome-related organelles complex-1 (BLOC-1).

It localises to the endosome. Its function is as follows. Component of the biogenesis of lysosome-related organelles complex-1 (BLOC-1), a complex involved in endosomal cargo sorting. In Zygosaccharomyces rouxii (strain ATCC 2623 / CBS 732 / NBRC 1130 / NCYC 568 / NRRL Y-229), this protein is Biogenesis of lysosome-related organelles complex 1 subunit SNN1 (SNN1).